An 807-amino-acid chain; its full sequence is Spondin-1 (807 aa).

The first 28 residues, 1–28, serve as a signal peptide directing secretion; sequence MRLSPAPLRLSRGPALLALALPLAAALA. The region spanning 29–194 is the Reelin domain; the sequence is FSDETLDKVA…DPTLDGVTDR (166 aa). Intrachain disulfides connect C44–C128, C156–C182, C199–C336, C200–C340, C202–C415, C443–C480, C454–C489, C459–C494, C502–C538, C513–C517, C548–C554, C559–C595, C570–C574, C605–C610, C615–C650, C626–C630, and C660–C665. In terms of domain architecture, Spondin spans 195 to 388; that stretch reads PILDCCACGT…LTSLDHPQSP (194 aa). N214 is a glycosylation site (N-linked (GlcNAc...) asparagine). 3 residues coordinate Ca(2+): D325, D354, and D358. TSP type-1 domains lie at 442–495, 501–555, 558–611, 614–666, and 668–721; these read TCIY…PGCS, TCTM…EECS, SCLV…PECH, PCLL…PECP, and DCEL…RKCL. N-linked (GlcNAc...) asparagine glycosylation occurs at N681. Positions 732-746 are enriched in basic and acidic residues; the sequence is REARESRRSEQLREE. Residues 732–752 form a disordered region; sequence REARESRRSEQLREESDGEQF. Positions 754–806 constitute a TSP type-1 6 domain; sequence GCRMRPWTAWSECTKLCGGGIQERYMTVKKRFKSSQFTSCKDKKEIRACNVHP.

As to quaternary structure, binds to the central extracellular domain of APP and inhibits beta-secretase cleavage of APP. Expressed at high levels in the floor plate.

The protein resides in the secreted. Its subcellular location is the extracellular space. It is found in the extracellular matrix. Cell adhesion protein that promotes the attachment of spinal cord and sensory neuron cells and the outgrowth of neurites in vitro. May contribute to the growth and guidance of axons in both the spinal cord and the PNS. The chain is Spondin-1 (Spon1) from Rattus norvegicus (Rat).